The following is a 447-amino-acid chain: Glutamate--tRNA ligase 1 (447 aa).

The 'HIGH' region motif lies at 10–20; the sequence is PSPTGMLHVGN. Positions 240 to 244 match the 'KMSKS' region motif; it reads KISKR. An ATP-binding site is contributed by Lys-243.

Belongs to the class-I aminoacyl-tRNA synthetase family. Glutamate--tRNA ligase type 1 subfamily. In terms of assembly, monomer.

Its subcellular location is the cytoplasm. It catalyses the reaction tRNA(Glu) + L-glutamate + ATP = L-glutamyl-tRNA(Glu) + AMP + diphosphate. Its function is as follows. Catalyzes the attachment of glutamate to tRNA(Glu) in a two-step reaction: glutamate is first activated by ATP to form Glu-AMP and then transferred to the acceptor end of tRNA(Glu). The sequence is that of Glutamate--tRNA ligase 1 from Rickettsia felis (strain ATCC VR-1525 / URRWXCal2) (Rickettsia azadi).